A 111-amino-acid polypeptide reads, in one-letter code: Aquaporin-2 (111 aa).

The Cytoplasmic segment spans residues S1 to R6. A helical transmembrane segment spans residues A7–L27. Topologically, residues N28–T37 are extracellular. A helical transmembrane segment spans residues V38 to L56. Over G57–G61 the chain is Cytoplasmic. The discontinuously helical intramembrane region spans A62 to A71. Residues N65–A67 carry the NPA 1 motif. Residues C72–R82 lie on the Cytoplasmic side of the membrane. The helical transmembrane segment at A83–L104 threads the bilayer. The Extracellular segment spans residues T105–G111.

The protein belongs to the MIP/aquaporin (TC 1.A.8) family. Homotetramer. Post-translationally, serine phosphorylation is necessary and sufficient for expression at the apical membrane. Endocytosis is not phosphorylation-dependent. N-glycosylated.

It localises to the apical cell membrane. Its subcellular location is the basolateral cell membrane. The protein resides in the cell membrane. The protein localises to the cytoplasmic vesicle membrane. It is found in the golgi apparatus. It localises to the trans-Golgi network membrane. The catalysed reaction is H2O(in) = H2O(out). It carries out the reaction glycerol(in) = glycerol(out). Functionally, forms a water-specific channel that provides the plasma membranes of renal collecting duct with high permeability to water, thereby permitting water to move in the direction of an osmotic gradient. Plays an essential role in renal water homeostasis. Could also be permeable to glycerol. The polypeptide is Aquaporin-2 (Macroscelides proboscideus (Short-eared elephant shrew)).